Here is a 120-residue protein sequence, read N- to C-terminus: Flagellar protein FliT (120 aa).

The tract at residues 1 to 50 is required for homodimerization; the sequence is MNDFISSLNNWQALYALSNTMLSLANSGQWDELIEQEVKYVTLVEAIARN. Positions 59 to 97 are fliD binding; the sequence is FQEKARELLTKVLANEAALKIKLQARMEELRVLIEQNGN.

Belongs to the FliT family. Homodimer. Interacts with FliD and FlhC.

Its subcellular location is the cytoplasm. The protein localises to the cytosol. Its function is as follows. Dual-function protein that regulates the transcription of class 2 flagellar operons and that also acts as an export chaperone for the filament-capping protein FliD. As a transcriptional regulator, acts as an anti-FlhDC factor; it directly binds FlhC, thus inhibiting the binding of the FlhC/FlhD complex to class 2 promoters, resulting in decreased expression of class 2 flagellar operons. As a chaperone, effects FliD transition to the membrane by preventing its premature polymerization, and by directing it to the export apparatus. The protein is Flagellar protein FliT of Cronobacter sakazakii (strain ATCC BAA-894) (Enterobacter sakazakii).